The primary structure comprises 360 residues: UPF0324 membrane protein plu2856 (360 aa).

The next 9 membrane-spanning stretches (helical) occupy residues 20–42 (LIPG…NIPW), 47–69 (GLGT…YPLL), 104–126 (VGIT…AIWL), 136–155 (QTVI…AIMA), 167–189 (VAVA…PWFY), 239–256 (MIRV…SRYI), 277–299 (WFAV…AAIV), 304–326 (NIDT…VSAI), and 333–355 (PILL…NLGI).

This sequence belongs to the UPF0324 family.

The protein localises to the cell membrane. The polypeptide is UPF0324 membrane protein plu2856 (Photorhabdus laumondii subsp. laumondii (strain DSM 15139 / CIP 105565 / TT01) (Photorhabdus luminescens subsp. laumondii)).